Reading from the N-terminus, the 407-residue chain is Phosphopentomutase (407 aa).

Mn(2+)-binding residues include aspartate 11, aspartate 305, histidine 310, aspartate 346, histidine 347, and histidine 358.

Belongs to the phosphopentomutase family. The cofactor is Mn(2+).

The protein localises to the cytoplasm. It catalyses the reaction 2-deoxy-alpha-D-ribose 1-phosphate = 2-deoxy-D-ribose 5-phosphate. The catalysed reaction is alpha-D-ribose 1-phosphate = D-ribose 5-phosphate. The protein operates within carbohydrate degradation; 2-deoxy-D-ribose 1-phosphate degradation; D-glyceraldehyde 3-phosphate and acetaldehyde from 2-deoxy-alpha-D-ribose 1-phosphate: step 1/2. Its function is as follows. Isomerase that catalyzes the conversion of deoxy-ribose 1-phosphate (dRib-1-P) and ribose 1-phosphate (Rib-1-P) to deoxy-ribose 5-phosphate (dRib-5-P) and ribose 5-phosphate (Rib-5-P), respectively. This chain is Phosphopentomutase, found in Legionella pneumophila (strain Lens).